The primary structure comprises 212 residues: Interleukin-6 (212 aa).

A signal peptide spans 1-29 (MNSFSTSAFGPVAFSLGLLLVLPAAFPAP). A disulfide bridge links Cys-72 with Cys-78. The N-linked (GlcNAc...) asparagine glycan is linked to Asn-73. Ser-81 carries the phosphoserine; by FAM20C modification. Cys-101 and Cys-111 form a disulfide bridge.

This sequence belongs to the IL-6 superfamily. Component of a hexamer of two molecules each of IL6, IL6R and IL6ST; first binds to IL6R to associate with the signaling subunit IL6ST. Interacts with IL6R (via the N-terminal ectodomain); this interaction may be affected by IL6R-binding with SORL1, hence decreasing IL6 cis signaling. Interacts with SORL1 (via the N-terminal ectodomain); this interaction leads to IL6 internalization and lysosomal degradation. May form a trimeric complex with the soluble SORL1 ectodomain and soluble IL6R receptor; this interaction might stabilize circulating IL6, hence promoting IL6 trans signaling. Post-translationally, N- and O-glycosylated. In terms of tissue distribution, produced by skeletal muscle.

The protein resides in the secreted. Its function is as follows. Cytokine with a wide variety of biological functions in immunity, tissue regeneration, and metabolism. Binds to IL6R, then the complex associates to the signaling subunit IL6ST/gp130 to trigger the intracellular IL6-signaling pathway. The interaction with the membrane-bound IL6R and IL6ST stimulates 'classic signaling', whereas the binding of IL6 and soluble IL6R to IL6ST stimulates 'trans-signaling'. Alternatively, 'cluster signaling' occurs when membrane-bound IL6:IL6R complexes on transmitter cells activate IL6ST receptors on neighboring receiver cells. In terms of biological role, IL6 is a potent inducer of the acute phase response. Rapid production of IL6 contributes to host defense during infection and tissue injury, but excessive IL6 synthesis is involved in disease pathology. In the innate immune response, is synthesized by myeloid cells, such as macrophages and dendritic cells, upon recognition of pathogens through toll-like receptors (TLRs) at the site of infection or tissue injury. In the adaptive immune response, is required for the differentiation of B cells into immunoglobulin-secreting cells. Plays a major role in the differentiation of CD4(+) T cell subsets. Essential factor for the development of T follicular helper (Tfh) cells that are required for the induction of germinal-center formation. Required to drive naive CD4(+) T cells to the Th17 lineage. Also required for proliferation of myeloma cells and the survival of plasmablast cells. Acts as an essential factor in bone homeostasis and on vessels directly or indirectly by induction of VEGF, resulting in increased angiogenesis activity and vascular permeability. Induces, through 'trans-signaling' and synergistically with IL1B and TNF, the production of VEGF. Involved in metabolic controls, is discharged into the bloodstream after muscle contraction increasing lipolysis and improving insulin resistance. 'Trans-signaling' in central nervous system also regulates energy and glucose homeostasis. Mediates, through GLP-1, crosstalk between insulin-sensitive tissues, intestinal L cells and pancreatic islets to adapt to changes in insulin demand. Also acts as a myokine. Plays a protective role during liver injury, being required for maintenance of tissue regeneration. Also has a pivotal role in iron metabolism by regulating HAMP/hepcidin expression upon inflammation or bacterial infection. Through activation of IL6ST-YAP-NOTCH pathway, induces inflammation-induced epithelial regeneration. The sequence is that of Interleukin-6 from Homo sapiens (Human).